The primary structure comprises 401 residues: Short chain dehydrogenase/reductase dpchH (401 aa).

N-linked (GlcNAc...) asparagine glycosylation is present at N16. A helical membrane pass occupies residues 51–71; that stretch reads VRAVDVLFGTFLYVPLGILFL. Residues 72-80, 99-100, and 118-120 contribute to the NAD(+) site; these read KKSLSGFGD, TG, and AKV. N-linked (GlcNAc...) asparagine glycosylation is present at N242. Y275 (proton acceptor) is an active-site residue. NAD(+) is bound by residues 275–279 and 308–310; these read YGTSK and GTI. N386 carries N-linked (GlcNAc...) asparagine glycosylation.

The protein localises to the membrane. It participates in secondary metabolite biosynthesis; terpenoid biosynthesis. In terms of biological role, short chain dehydrogenase/reductase; part of the gene cluster that mediates the biosynthesis of the diterpenoid pyrones higginsianins A and B. The first step of the pathway is the synthesis of the alpha-pyrone moiety by the polyketide synthase dpchA via condensation of one acetyl-CoA starter unit with 3 malonyl-CoA units and 2 methylations. The alpha-pyrone is then combined with geranylgeranyl pyrophosphate (GGPP) formed by the GGPP synthase dpchD through the action of the prenyltransferase dpchC to yield a linear alpha-pyrone diterpenoid. Subsequent steps in the diterpenoid pyrone biosynthetic pathway involve the decalin core formation, which is initiated by the epoxidation of the C10-C11 olefin by the FAD-dependent oxidoreductase dpchE, and is followed by a cyclization cascade catalyzed by the terpene cyclase dpchB. The short chain dehydrogenase/reductase dpchG then oxidizes the 8S hydroxy group to a ketone and the short chain dehydrogenase/reductase dpchH reduces the ketone to the 8R hydroxy group to yield higginsianin B. Finally, the FAD-dependent oxidoreductase dpchF converts higginsianin B into higginsianin A. This chain is Short chain dehydrogenase/reductase dpchH, found in Colletotrichum higginsianum (strain IMI 349063) (Crucifer anthracnose fungus).